A 192-amino-acid polypeptide reads, in one-letter code: Phosphoheptose isomerase (192 aa).

Residues Leu35–Asn192 enclose the SIS domain. Asn50–Gly52 serves as a coordination point for substrate. Residues His59 and Glu63 each coordinate Zn(2+). Substrate-binding positions include Glu63, Asn92–Asp93, Ser118–Ser120, Ser123, and Gln170. The Zn(2+) site is built by Gln170 and His178.

Belongs to the SIS family. GmhA subfamily. Homotetramer. Zn(2+) is required as a cofactor.

The protein localises to the cytoplasm. The catalysed reaction is 2 D-sedoheptulose 7-phosphate = D-glycero-alpha-D-manno-heptose 7-phosphate + D-glycero-beta-D-manno-heptose 7-phosphate. The protein operates within carbohydrate biosynthesis; D-glycero-D-manno-heptose 7-phosphate biosynthesis; D-glycero-alpha-D-manno-heptose 7-phosphate and D-glycero-beta-D-manno-heptose 7-phosphate from sedoheptulose 7-phosphate: step 1/1. In terms of biological role, catalyzes the isomerization of sedoheptulose 7-phosphate in D-glycero-D-manno-heptose 7-phosphate. The chain is Phosphoheptose isomerase from Helicobacter pylori (strain Shi470).